The following is a 226-amino-acid chain: uncharacterized protein (226 aa).

Residues 18–219 enclose the N-acetyltransferase domain; that stretch reads LTIRNYTETD…YGVLMEWKNV (202 aa).

The protein belongs to the acetyltransferase family.

This is an uncharacterized protein from Bacillus subtilis (strain 168).